The following is a 468-amino-acid chain: Shaggy-related protein kinase theta (468 aa).

Disordered stretches follow at residues 1 to 53 (MNVM…DQST) and 91 to 112 (HANR…CGTE). The Protein kinase domain maps to 134 to 418 (YMAQRVVGTG…ALEACAHPFF (285 aa)). ATP-binding positions include 140–148 (VGTGSFGVV) and Lys-163. The active-site Proton acceptor is Asp-259. A Phosphotyrosine modification is found at Tyr-294.

Belongs to the protein kinase superfamily. CMGC Ser/Thr protein kinase family. GSK-3 subfamily. Autophosphorylated mainly on threonine and serine residues. As to expression, in developing pollen.

The catalysed reaction is L-seryl-[protein] + ATP = O-phospho-L-seryl-[protein] + ADP + H(+). It carries out the reaction L-threonyl-[protein] + ATP = O-phospho-L-threonyl-[protein] + ADP + H(+). Its function is as follows. May mediate extracellular signals to regulate transcription in differentiating cells. The protein is Shaggy-related protein kinase theta of Brassica napus (Rape).